The following is a 153-amino-acid chain: Putative pre-16S rRNA nuclease (153 aa).

Belongs to the YqgF nuclease family.

The protein localises to the cytoplasm. Functionally, could be a nuclease involved in processing of the 5'-end of pre-16S rRNA. The polypeptide is Putative pre-16S rRNA nuclease (Prochlorococcus marinus (strain AS9601)).